The following is a 143-amino-acid chain: Large ribosomal subunit protein uL13 (143 aa).

It belongs to the universal ribosomal protein uL13 family. Part of the 50S ribosomal subunit.

Its function is as follows. This protein is one of the early assembly proteins of the 50S ribosomal subunit, although it is not seen to bind rRNA by itself. It is important during the early stages of 50S assembly. The polypeptide is Large ribosomal subunit protein uL13 (Methylacidiphilum infernorum (isolate V4) (Methylokorus infernorum (strain V4))).